We begin with the raw amino-acid sequence, 308 residues long: MTENRKKLVEVKNVSLTFNKGKANQVKAIDNVSFNIYEGEVFGLVGESGSGKTTIGRAILKLYNIDKGEIDFEGETISKLKGKSLFNFRKKAQMIFQDPQASLNSRMKVRDIIAEGLDVHKLVKNKADRDAKVQDLLDLVGLNKDHLTRYPHEFSGGQRQRIGIARALAVEPKFIIADEPISALDVSIQAQVVNLMQKLQHEQGLTYLFIAHDLSMVKYISDRIGVMHWGKIVEIGTSDEVYHHPIHPYTQSLLSAVPEPDPVLERQRIHKVYDPVDELDGQEREMREITPGHFVLATEEEAKAYKKK.

Residues 9-254 (VEVKNVSLTF…PIHPYTQSLL (246 aa)) enclose the ABC transporter domain. 46–53 (GESGSGKT) serves as a coordination point for ATP.

Belongs to the ABC transporter superfamily. As to quaternary structure, the complex is composed of two ATP-binding proteins (OppD and OppF), two transmembrane proteins (OppB and OppC) and a solute-binding protein (OppA).

The protein resides in the cell membrane. The catalysed reaction is a [peptide](out) + ATP + H2O = a [peptide](in) + ADP + phosphate + H(+). Part of the ABC transporter complex OppABCDF involved in the uptake of oligopeptides. Probably responsible for energy coupling to the transport system. The chain is Oligopeptide transport ATP-binding protein OppF (oppF) from Streptococcus mutans serotype c (strain ATCC 700610 / UA159).